The following is a 449-amino-acid chain: Phosphomethylpyrimidine synthase (449 aa).

Substrate contacts are provided by residues N80, M109, Y138, H173, 193 to 195, 234 to 237, and E273; these read SRG and DSLR. A Zn(2+)-binding site is contributed by H277. Position 300 (Y300) interacts with substrate. Residue H341 coordinates Zn(2+). [4Fe-4S] cluster-binding residues include C421, C424, and C429.

Belongs to the ThiC family. Homodimer. Requires [4Fe-4S] cluster as cofactor.

The catalysed reaction is 5-amino-1-(5-phospho-beta-D-ribosyl)imidazole + S-adenosyl-L-methionine = 4-amino-2-methyl-5-(phosphooxymethyl)pyrimidine + CO + 5'-deoxyadenosine + formate + L-methionine + 3 H(+). Its pathway is cofactor biosynthesis; thiamine diphosphate biosynthesis. Functionally, catalyzes the synthesis of the hydroxymethylpyrimidine phosphate (HMP-P) moiety of thiamine from aminoimidazole ribotide (AIR) in a radical S-adenosyl-L-methionine (SAM)-dependent reaction. The chain is Phosphomethylpyrimidine synthase from Campylobacter hominis (strain ATCC BAA-381 / DSM 21671 / CCUG 45161 / LMG 19568 / NCTC 13146 / CH001A).